Here is a 318-residue protein sequence, read N- to C-terminus: tRNA-cytidine(32) 2-sulfurtransferase (318 aa).

Positions 65 to 70 match the PP-loop motif motif; it reads SGGKDS. The [4Fe-4S] cluster site is built by cysteine 140, cysteine 143, and cysteine 231.

Belongs to the TtcA family. As to quaternary structure, homodimer. The cofactor is Mg(2+). It depends on [4Fe-4S] cluster as a cofactor.

The protein resides in the cytoplasm. The catalysed reaction is cytidine(32) in tRNA + S-sulfanyl-L-cysteinyl-[cysteine desulfurase] + AH2 + ATP = 2-thiocytidine(32) in tRNA + L-cysteinyl-[cysteine desulfurase] + A + AMP + diphosphate + H(+). Its pathway is tRNA modification. Its function is as follows. Catalyzes the ATP-dependent 2-thiolation of cytidine in position 32 of tRNA, to form 2-thiocytidine (s(2)C32). The sulfur atoms are provided by the cysteine/cysteine desulfurase (IscS) system. The protein is tRNA-cytidine(32) 2-sulfurtransferase of Herminiimonas arsenicoxydans.